A 271-amino-acid polypeptide reads, in one-letter code: MSKLVWLDAGHGGKDSGAAANGIKEKDIVLKIVKKVKSILTSRYEVAVKLTRDSDVFYELIDRARKANAAKADLFVSVHINATPGGKGFETYRYVKTSASSSTGQQQKVLHDAIYKRIKKYGIKDRGEKAADLSVLRNTSMPAVLTENLFIDNKDEAALLKKDSFLNDVAEGHAEGIAEILNLKKKSGGSAPKKEDKPSSGKTKMVIVKDNPDGFLWVYNKADWNARYKKVKPDEAFTIDKTVTVNGSKMYKLKSGLYITAASKYVTVKEK.

One can recognise a MurNAc-LAA domain in the interval 5–178; the sequence is VWLDAGHGGK…VAEGHAEGIA (174 aa).

It localises to the host cytoplasm. Endolysin that degrades host peptidoglycans and participates with the holin protein(s) in the sequential events which lead to the programmed host cell lysis releasing the mature viral particles. Once the holin(s) has permeabilized the host cell membrane, the endolysin can reach the periplasm and break down the peptidoglycan layer. The sequence is that of Endolysin (25) from Bacillus phage SPP1 (Bacteriophage SPP1).